A 582-amino-acid chain; its full sequence is Proline--tRNA ligase (582 aa).

The protein belongs to the class-II aminoacyl-tRNA synthetase family. ProS type 1 subfamily. Homodimer.

Its subcellular location is the cytoplasm. It catalyses the reaction tRNA(Pro) + L-proline + ATP = L-prolyl-tRNA(Pro) + AMP + diphosphate. Catalyzes the attachment of proline to tRNA(Pro) in a two-step reaction: proline is first activated by ATP to form Pro-AMP and then transferred to the acceptor end of tRNA(Pro). As ProRS can inadvertently accommodate and process non-cognate amino acids such as alanine and cysteine, to avoid such errors it has two additional distinct editing activities against alanine. One activity is designated as 'pretransfer' editing and involves the tRNA(Pro)-independent hydrolysis of activated Ala-AMP. The other activity is designated 'posttransfer' editing and involves deacylation of mischarged Ala-tRNA(Pro). The misacylated Cys-tRNA(Pro) is not edited by ProRS. This is Proline--tRNA ligase from Mycobacterium tuberculosis (strain CDC 1551 / Oshkosh).